Reading from the N-terminus, the 502-residue chain is Lipoprotein LipO (502 aa).

The signal sequence occupies residues 1-21 (MKIRMRKKWMALPLAAMMIAG). The N-palmitoyl cysteine moiety is linked to residue Cys22. Cys22 carries S-diacylglycerol cysteine lipidation.

It localises to the cell membrane. The protein is Lipoprotein LipO (lipO) of Bacillus subtilis (strain 168).